A 251-amino-acid chain; its full sequence is Gamma-interferon-inducible lysosomal thiol reductase (251 aa).

The N-terminal stretch at 1-21 (MFGFRLSVLLFAVCSLSACSC) is a signal peptide. The Saposin A-type domain occupies 22–60 (MFVNSCKYPPSQWCDSRDIAAQCGVLEQCMKFNASPVTV). Cysteines 68 and 71 form a disulfide. Asn108 is a glycosylation site (N-linked (GlcNAc...) asparagine).

This sequence belongs to the GILT family. As to quaternary structure, dimer; disulfide-linked. Highly expressed in spleen and kidney. Also detected at lower levels in liver, heart, brain, intestine and gill.

The protein localises to the secreted. It localises to the lysosome. Functionally, lysosomal thiol reductase that can reduce protein disulfide bonds. May facilitate the complete unfolding of proteins destined for lysosomal degradation. Plays an important role in antigen processing. The sequence is that of Gamma-interferon-inducible lysosomal thiol reductase from Carassius auratus (Goldfish).